An 822-amino-acid polypeptide reads, in one-letter code: MTDTRRRVKVYTLNEDRQWDDRGTGHVSSGYVERLKGMSLLVRAESDGSLLLESKINTNTAYQKQQDTLIVWSEAENYDLALSFQEKAGCDEIWEKICQVQGKDPSVDITQDLVDESEEERFDDMSSPGLELPSCELSRLEEIAEVVASSLPSPLRREKLAVALENEGYLKKLLELFHVCEDLENIEGLHHLYEVIKGIFLLNRTALFEVMFSEDCMMDIIGCLEYDPSLPTQRKHREFLTKTAKFKEVIPISDPELKQKIHQTYRVQYIQDVVLPTPSVFEENMLSTLHSFIFFNKVEIVGMLQEDEKFLTELFAHLTDEATDDEKRQELVNFLKEFCAFSQTLQPQNRDAFFKTLSNMGILPALEVILGMDDPQVRSAATDIFSYLVEYNPSMVREFVMQEAQQNDDDILLINLIIEHMICDTDPELGGAVQLTGLLRTLVDPENMLATTNKTEKTEFLGFFYKHCMHVLTAPLLANTTEEKPSKDDFQAAQLLALILELLTFCVEHHTYHIKNYIINKDILRRVLVLMSSMHSFLGLCALRFMRKIVGLKDEFYNRYIVKSFLFEPVVKAFLNNGSRYNLMNSAILEIFEYIRVEDIKSLTAHVVENYWKALEDVEYVQTFKGLKLRYDQQRERQDNPKLDSMRSILRNHRYRRDARSIEDEEEMWFNTDEDDLEDGEPVVLPSEKIKNSEDLMDPISKFMERKKLKESEEKEVLLKTNLTGRQSPNFKLSFSGATKTNLTSQLSASGHPGSPGSPGSPGSPESPGSVSKSTPQAAAITTKGGLIGLVDYPDDDEEDDDNDEEEKEERLPLTKKARLGS.

The WH1 domain occupies 1–100 (MTDTRRRVKV…DEIWEKICQV (100 aa)). Positions 744–822 (TSQLSASGHP…PLTKKARLGS (79 aa)) are disordered. A compositionally biased stretch (low complexity) spans 761 to 774 (SPGSPESPGSVSKS). Acidic residues predominate over residues 793 to 808 (YPDDDEEDDDNDEEEK).

It belongs to the SMEK family. As to quaternary structure, serine/threonine-protein phosphatase 4 (PP4) occurs in different assemblies of the catalytic and one or more regulatory subunits.

Regulatory subunit of serine/threonine-protein phosphatase 4. The polypeptide is Serine/threonine-protein phosphatase 4 regulatory subunit 3 (smek1) (Xenopus laevis (African clawed frog)).